The primary structure comprises 427 residues: Tyrosine--tRNA ligase (427 aa).

Tyr-39 is a binding site for L-tyrosine. Positions 44–53 match the 'HIGH' region motif; it reads PTSDSLHIGH. L-tyrosine is bound by residues Tyr-178 and Gln-182. The 'KMSKS' region signature appears at 238–242; sequence KFGKT. Residue Lys-241 coordinates ATP. The S4 RNA-binding domain maps to 360–417; sequence ITLQQALVESKLVVSRAQARELISSNSITVNSKKQLKTEYIFCATDRLYNRFTLLRRG.

It belongs to the class-I aminoacyl-tRNA synthetase family. TyrS type 1 subfamily. In terms of assembly, homodimer.

It localises to the cytoplasm. It catalyses the reaction tRNA(Tyr) + L-tyrosine + ATP = L-tyrosyl-tRNA(Tyr) + AMP + diphosphate + H(+). In terms of biological role, catalyzes the attachment of tyrosine to tRNA(Tyr) in a two-step reaction: tyrosine is first activated by ATP to form Tyr-AMP and then transferred to the acceptor end of tRNA(Tyr). This is Tyrosine--tRNA ligase from Blochmanniella pennsylvanica (strain BPEN).